The primary structure comprises 137 residues: MPTIQQLVRKGREQLVFKSKSPALDSCPQRRGVCTRVYTTTPKKPNSAMRKVARVRLTNSKEVNAYIPGEGHNLQEHSIVLIRGGRVKDLPGVRYHIVRGALDTAGVNGRKQSRSKYGAKRPKPGQAAAAPAKGKKK.

Asp-89 carries the post-translational modification 3-methylthioaspartic acid. A disordered region spans residues Thr-104 to Lys-137. The span at Lys-111–Lys-123 shows a compositional bias: basic residues. Residues Pro-124–Lys-137 show a composition bias toward low complexity.

It belongs to the universal ribosomal protein uS12 family. Part of the 30S ribosomal subunit. Contacts proteins S8 and S17. May interact with IF1 in the 30S initiation complex.

In terms of biological role, with S4 and S5 plays an important role in translational accuracy. Interacts with and stabilizes bases of the 16S rRNA that are involved in tRNA selection in the A site and with the mRNA backbone. Located at the interface of the 30S and 50S subunits, it traverses the body of the 30S subunit contacting proteins on the other side and probably holding the rRNA structure together. The combined cluster of proteins S8, S12 and S17 appears to hold together the shoulder and platform of the 30S subunit. This is Small ribosomal subunit protein uS12 from Cytophaga hutchinsonii (strain ATCC 33406 / DSM 1761 / CIP 103989 / NBRC 15051 / NCIMB 9469 / D465).